Here is a 145-residue protein sequence, read N- to C-terminus: 3-dehydroquinate dehydratase (145 aa).

Tyr24 acts as the Proton acceptor in catalysis. Substrate contacts are provided by Asn75, His81, and Asp88. His101 serves as the catalytic Proton donor. Substrate contacts are provided by residues 102–103 and Arg112; that span reads IS.

This sequence belongs to the type-II 3-dehydroquinase family. Homododecamer.

The enzyme catalyses 3-dehydroquinate = 3-dehydroshikimate + H2O. Its pathway is metabolic intermediate biosynthesis; chorismate biosynthesis; chorismate from D-erythrose 4-phosphate and phosphoenolpyruvate: step 3/7. In terms of biological role, catalyzes a trans-dehydration via an enolate intermediate. The protein is 3-dehydroquinate dehydratase (aroQ) of Corynebacterium glutamicum (strain ATCC 13032 / DSM 20300 / JCM 1318 / BCRC 11384 / CCUG 27702 / LMG 3730 / NBRC 12168 / NCIMB 10025 / NRRL B-2784 / 534).